A 161-amino-acid polypeptide reads, in one-letter code: Ribosome maturation factor RimP (161 aa).

The protein belongs to the RimP family.

Its subcellular location is the cytoplasm. Its function is as follows. Required for maturation of 30S ribosomal subunits. In Pelobacter propionicus (strain DSM 2379 / NBRC 103807 / OttBd1), this protein is Ribosome maturation factor RimP.